The following is a 554-amino-acid chain: Malate synthase 1 (554 aa).

The Proton acceptor role is filled by Arg-177. The Proton donor role is filled by Asp-457. The SKL peroxisome targeting motif signature appears at Ser-552 to Leu-554.

The protein belongs to the malate synthase family. As to quaternary structure, interacts with PEX9.

The protein resides in the peroxisome matrix. The enzyme catalyses glyoxylate + acetyl-CoA + H2O = (S)-malate + CoA + H(+). It participates in carbohydrate metabolism; glyoxylate cycle; (S)-malate from isocitrate: step 2/2. Functionally, malate synthase which takes part in the glyoxylate cycle. MLS1 activity is essential for cells to grow on oleic acid as a sole carbon source. Two steps of the glyoxylate cycle take place in the cytosol, the splitting of isocitrate into succinate and glyoxylate, and the dehydrogenation of malate to oxaloacetate. However, the formation of malate from glyoxylate and acetyl-CoA undertaken MLS1, occurs in the peroxisomes when cells are grown on oleic acid. The source of acetyl-CoA being either peroxisomal when breaking down fatty acids, or cytosolic when extra-cellular two-carbon substrates are used, therefore, although not strictly essential, the peroxisomal localization of MLS1 appears to be advantageous for cells growing on oleic acid, in that acetyl-CoA production and utilization are thereby intimately compartmentalized together to increase efficiency. This chain is Malate synthase 1, found in Saccharomyces cerevisiae (strain ATCC 204508 / S288c) (Baker's yeast).